The primary structure comprises 420 residues: ATP phosphoribosyltransferase regulatory subunit (420 aa).

The protein belongs to the class-II aminoacyl-tRNA synthetase family. HisZ subfamily. In terms of assembly, heteromultimer composed of HisG and HisZ subunits.

It localises to the cytoplasm. It participates in amino-acid biosynthesis; L-histidine biosynthesis; L-histidine from 5-phospho-alpha-D-ribose 1-diphosphate: step 1/9. Required for the first step of histidine biosynthesis. May allow the feedback regulation of ATP phosphoribosyltransferase activity by histidine. The polypeptide is ATP phosphoribosyltransferase regulatory subunit (Bacillus cereus (strain B4264)).